The following is a 438-amino-acid chain: Ribosomal protein uS12 methylthiotransferase RimO (438 aa).

In terms of domain architecture, MTTase N-terminal spans 6-118 (KQLCLISLGC…IDILIAKKQN (113 aa)). Residues cysteine 15, cysteine 49, cysteine 81, cysteine 150, cysteine 154, and cysteine 157 each contribute to the [4Fe-4S] cluster site. A Radical SAM core domain is found at 136-364 (TGSSVHAYVK…NKIALKHQHN (229 aa)).

The protein belongs to the methylthiotransferase family. RimO subfamily. Requires [4Fe-4S] cluster as cofactor.

It localises to the cytoplasm. The catalysed reaction is L-aspartate(89)-[ribosomal protein uS12]-hydrogen + (sulfur carrier)-SH + AH2 + 2 S-adenosyl-L-methionine = 3-methylsulfanyl-L-aspartate(89)-[ribosomal protein uS12]-hydrogen + (sulfur carrier)-H + 5'-deoxyadenosine + L-methionine + A + S-adenosyl-L-homocysteine + 2 H(+). Functionally, catalyzes the methylthiolation of an aspartic acid residue of ribosomal protein uS12. The chain is Ribosomal protein uS12 methylthiotransferase RimO from Helicobacter acinonychis (strain Sheeba).